Reading from the N-terminus, the 285-residue chain is Bifunctional protein FolD (285 aa).

NADP(+) is bound by residues 164–166, isoleucine 189, and isoleucine 230; that span reads GAS.

This sequence belongs to the tetrahydrofolate dehydrogenase/cyclohydrolase family. Homodimer.

The enzyme catalyses (6R)-5,10-methylene-5,6,7,8-tetrahydrofolate + NADP(+) = (6R)-5,10-methenyltetrahydrofolate + NADPH. It catalyses the reaction (6R)-5,10-methenyltetrahydrofolate + H2O = (6R)-10-formyltetrahydrofolate + H(+). It participates in one-carbon metabolism; tetrahydrofolate interconversion. Its function is as follows. Catalyzes the oxidation of 5,10-methylenetetrahydrofolate to 5,10-methenyltetrahydrofolate and then the hydrolysis of 5,10-methenyltetrahydrofolate to 10-formyltetrahydrofolate. The sequence is that of Bifunctional protein FolD from Sulfurimonas denitrificans (strain ATCC 33889 / DSM 1251) (Thiomicrospira denitrificans (strain ATCC 33889 / DSM 1251)).